A 298-amino-acid chain; its full sequence is Cobalt-precorrin-5B C(1)-methyltransferase (298 aa).

This sequence belongs to the CbiD family.

It catalyses the reaction Co-precorrin-5B + S-adenosyl-L-methionine = Co-precorrin-6A + S-adenosyl-L-homocysteine. The protein operates within cofactor biosynthesis; adenosylcobalamin biosynthesis; cob(II)yrinate a,c-diamide from sirohydrochlorin (anaerobic route): step 6/10. Catalyzes the methylation of C-1 in cobalt-precorrin-5B to form cobalt-precorrin-6A. This is Cobalt-precorrin-5B C(1)-methyltransferase from Archaeoglobus fulgidus (strain ATCC 49558 / DSM 4304 / JCM 9628 / NBRC 100126 / VC-16).